Consider the following 301-residue polypeptide: UDP-N-acetylenolpyruvoylglucosamine reductase (301 aa).

Residues 29 to 195 (KIGGPADVFV…VEAIFSLTRG (167 aa)) enclose the FAD-binding PCMH-type domain. The active site involves arginine 174. Catalysis depends on serine 224, which acts as the Proton donor. The active site involves glutamate 294.

The protein belongs to the MurB family. It depends on FAD as a cofactor.

The protein resides in the cytoplasm. The enzyme catalyses UDP-N-acetyl-alpha-D-muramate + NADP(+) = UDP-N-acetyl-3-O-(1-carboxyvinyl)-alpha-D-glucosamine + NADPH + H(+). Its pathway is cell wall biogenesis; peptidoglycan biosynthesis. In terms of biological role, cell wall formation. In Halalkalibacterium halodurans (strain ATCC BAA-125 / DSM 18197 / FERM 7344 / JCM 9153 / C-125) (Bacillus halodurans), this protein is UDP-N-acetylenolpyruvoylglucosamine reductase.